The sequence spans 412 residues: Transforming growth factor beta-2 proprotein (412 aa).

The signal sequence occupies residues 1–20; that stretch reads MHCYLLSVFLTLDLAAVALS. 3 N-linked (GlcNAc...) asparagine glycosylation sites follow: asparagine 72, asparagine 139, and asparagine 240. Intrachain disulfides connect cysteine 307–cysteine 316, cysteine 315–cysteine 378, cysteine 344–cysteine 409, and cysteine 348–cysteine 411.

It belongs to the TGF-beta family. In terms of assembly, interacts with Transforming growth factor beta-2 (TGF-beta-2) chain; interaction is non-covalent and maintains (TGF-beta-2) in a latent state. Homodimer; disulfide-linked. Interacts with TGF-beta receptors (TGFBR1 and TGFBR2), leading to signal transduction. In terms of processing, the precursor proprotein is cleaved in the Golgi apparatus to form Transforming growth factor beta-2 (TGF-beta-2) and Latency-associated peptide (LAP) chains, which remain non-covalently linked, rendering TGF-beta-2 inactive.

The protein resides in the secreted. It localises to the extracellular space. Its subcellular location is the extracellular matrix. Precursor of the Latency-associated peptide (LAP) and Transforming growth factor beta-2 (TGF-beta-2) chains, which constitute the regulatory and active subunit of TGF-beta-2, respectively. Its function is as follows. Required to maintain the Transforming growth factor beta-2 (TGF-beta-2) chain in a latent state during storage in extracellular matrix. Associates non-covalently with TGF-beta-2 and regulates its activation via interaction with 'milieu molecules', such as LTBP1 and LRRC32/GARP, that control activation of TGF-beta-2. Functionally, multifunctional protein that regulates various processes such as angiogenesis and heart development. Activation into mature form follows different steps: following cleavage of the proprotein in the Golgi apparatus, Latency-associated peptide (LAP) and Transforming growth factor beta-2 (TGF-beta-2) chains remain non-covalently linked rendering TGF-beta-2 inactive during storage in extracellular matrix. At the same time, LAP chain interacts with 'milieu molecules', such as LTBP1 and LRRC32/GARP, that control activation of TGF-beta-2 and maintain it in a latent state during storage in extracellular milieus. Once activated following release of LAP, TGF-beta-2 acts by binding to TGF-beta receptors (TGFBR1 and TGFBR2), which transduce signal. In Gallus gallus (Chicken), this protein is Transforming growth factor beta-2 proprotein (TGFB2).